The sequence spans 320 residues: Cytochrome f (320 aa).

An N-terminal signal peptide occupies residues 1 to 35 (MQTRNTLSWIKEEITRSISVSLMIYIITWASISNA). Residues tyrosine 36, cysteine 56, cysteine 59, and histidine 60 each coordinate heme. A helical membrane pass occupies residues 286–306 (VQGLLFFLASVVLAQIFLVLK).

Belongs to the cytochrome f family. As to quaternary structure, the 4 large subunits of the cytochrome b6-f complex are cytochrome b6, subunit IV (17 kDa polypeptide, petD), cytochrome f and the Rieske protein, while the 4 small subunits are PetG, PetL, PetM and PetN. The complex functions as a dimer. Requires heme as cofactor.

Its subcellular location is the plastid. It is found in the chloroplast thylakoid membrane. Functionally, component of the cytochrome b6-f complex, which mediates electron transfer between photosystem II (PSII) and photosystem I (PSI), cyclic electron flow around PSI, and state transitions. This Carica papaya (Papaya) protein is Cytochrome f.